The following is a 350-amino-acid chain: UDP-3-O-acylglucosamine N-acyltransferase (350 aa).

The Proton acceptor role is filled by His-240.

It belongs to the transferase hexapeptide repeat family. LpxD subfamily. As to quaternary structure, homotrimer.

It carries out the reaction a UDP-3-O-[(3R)-3-hydroxyacyl]-alpha-D-glucosamine + a (3R)-hydroxyacyl-[ACP] = a UDP-2-N,3-O-bis[(3R)-3-hydroxyacyl]-alpha-D-glucosamine + holo-[ACP] + H(+). Its pathway is bacterial outer membrane biogenesis; LPS lipid A biosynthesis. Functionally, catalyzes the N-acylation of UDP-3-O-acylglucosamine using 3-hydroxyacyl-ACP as the acyl donor. Is involved in the biosynthesis of lipid A, a phosphorylated glycolipid that anchors the lipopolysaccharide to the outer membrane of the cell. The sequence is that of UDP-3-O-acylglucosamine N-acyltransferase from Methylobacillus flagellatus (strain ATCC 51484 / DSM 6875 / VKM B-1610 / KT).